The sequence spans 304 residues: Ribonuclease Z (304 aa).

Zn(2+) contacts are provided by histidine 63, histidine 65, aspartate 67, histidine 68, histidine 143, aspartate 213, and histidine 271. Aspartate 67 functions as the Proton acceptor in the catalytic mechanism.

Belongs to the RNase Z family. As to quaternary structure, homodimer. The cofactor is Zn(2+).

It catalyses the reaction Endonucleolytic cleavage of RNA, removing extra 3' nucleotides from tRNA precursor, generating 3' termini of tRNAs. A 3'-hydroxy group is left at the tRNA terminus and a 5'-phosphoryl group is left at the trailer molecule.. Zinc phosphodiesterase, which displays some tRNA 3'-processing endonuclease activity. Probably involved in tRNA maturation, by removing a 3'-trailer from precursor tRNA. This chain is Ribonuclease Z, found in Bacteroides fragilis (strain YCH46).